The sequence spans 977 residues: DNA-directed RNA polymerase 3A, chloroplastic (977 aa).

The transit peptide at 1-72 (MASTASYSPS…NNIQSQTTVC (72 aa)) directs the protein to the chloroplast. Active-site residues include aspartate 678, lysine 753, and aspartate 910.

Belongs to the phage and mitochondrial RNA polymerase family.

The protein localises to the plastid. It localises to the chloroplast. The enzyme catalyses RNA(n) + a ribonucleoside 5'-triphosphate = RNA(n+1) + diphosphate. Its function is as follows. DNA-dependent RNA polymerase catalyzes the transcription of DNA into RNA using the four ribonucleoside triphosphates as substrates. This Nicotiana tabacum (Common tobacco) protein is DNA-directed RNA polymerase 3A, chloroplastic (RPOT3-SYL).